The sequence spans 426 residues: Histidine--tRNA ligase (426 aa).

The protein belongs to the class-II aminoacyl-tRNA synthetase family. As to quaternary structure, homodimer.

Its subcellular location is the cytoplasm. It carries out the reaction tRNA(His) + L-histidine + ATP = L-histidyl-tRNA(His) + AMP + diphosphate + H(+). This Streptococcus equi subsp. equi (strain 4047) protein is Histidine--tRNA ligase.